The chain runs to 310 residues: Mas-related G-protein coupled receptor member E (310 aa).

Residues 1-22 (MTSLSVHTDSPSTQGEMAFNLT) lie on the Extracellular side of the membrane. N20 is a glycosylation site (N-linked (GlcNAc...) asparagine). A helical transmembrane segment spans residues 23-43 (ILSLTELLSLGGLLGNGVALW). Residues 44 to 60 (LLNQNVYRNPFSIYLLD) lie on the Cytoplasmic side of the membrane. The chain crosses the membrane as a helical span at residues 61–81 (VACADLIFLCCHMVAIIPELL). Residues 82–92 (QDQLNFPEFVH) lie on the Extracellular side of the membrane. Residues 93 to 113 (ISLTMLRFFCYIVGLSLLAAI) form a helical membrane-spanning segment. Topologically, residues 114–133 (STEQCLATLFPAWYLCRRPR) are cytoplasmic. A helical transmembrane segment spans residues 134-154 (YLTTCVCALIWVLCLLLDLLL). Residues 155 to 174 (SGACTQFFGAPSYHLCDMLW) lie on the Extracellular side of the membrane. The chain crosses the membrane as a helical span at residues 175–195 (LVVAVLLAALCCTMCVTSLLL). Residues 196–213 (LLRVERGPERHQPRGFPT) lie on the Cytoplasmic side of the membrane. The chain crosses the membrane as a helical span at residues 214-234 (LVLLAVLLFLFCGLPFGIFWL). Residues 235–248 (SKNLSWHIPLYFYH) are Extracellular-facing. N-linked (GlcNAc...) asparagine glycosylation occurs at N237. A helical membrane pass occupies residues 249–269 (FSFFMASVHSAAKPAIYFFLG). The Cytoplasmic portion of the chain corresponds to 270–310 (STPGQRFREPLRLVLQRALGDEAELGAGREASQGGLVDMTV).

Belongs to the G-protein coupled receptor 1 family. Mas subfamily.

Its subcellular location is the cell membrane. Orphan receptor. May regulate nociceptor function and/or development, including the sensation or modulation of pain. This chain is Mas-related G-protein coupled receptor member E (Mrgpre), found in Mus musculus (Mouse).